We begin with the raw amino-acid sequence, 73 residues long: UPF0235 protein HY04AAS1_1378 (73 aa).

It belongs to the UPF0235 family.

This is UPF0235 protein HY04AAS1_1378 from Hydrogenobaculum sp. (strain Y04AAS1).